The following is a 442-amino-acid chain: Inner membrane protein PPF-1, chloroplastic (442 aa).

Residues 1 to 108 are Lumenal-facing; the sequence is MAKTLISSPS…EFVLKVLKDG (108 aa). A helical membrane pass occupies residues 109–129; that stretch reads LSSVHVPYSYGFAIILLTVIV. At 130–183 the chain is on the stromal side; that stretch reads KAATLPLTKQQVESTLAMQNLQPKIKAIQERYAGNQERIQLETSRLYTQAGVNP. The chain crosses the membrane as a helical span at residues 184–204; it reads LAGCLPTLATIPVWIGLYQAL. The Lumenal segment spans residues 205 to 296; it reads SNVANEGLLT…QKNTLLIFKF (92 aa). A helical transmembrane segment spans residues 297–317; the sequence is LPLMIGYFSLSVPSGLTIYWF. The Stromal segment spans residues 318–442; that stretch reads TNNVLSTAQQ…SKRSKRKPVA (125 aa). Disordered regions lie at residues 350 to 371 and 390 to 442; these read AGQA…RQLK and PLAS…KPVA. Over residues 358 to 371 the composition is skewed to basic and acidic residues; sequence SKPEKGGERFRQLK. Over residues 414-427 the composition is skewed to polar residues; the sequence is ESNTSKVSQEVQSF. The span at 431-442 shows a compositional bias: basic residues; that stretch reads RRSKRSKRKPVA.

This sequence belongs to the OXA1/ALB3/YidC (TC 2.A.9.2) family. As to expression, highly expressed in apical buds. Low levels of expression in leaves. Not expressed in roots, and stems.

The protein localises to the plastid. The protein resides in the chloroplast thylakoid membrane. May be required for the insertion of some integral membrane proteins into the chloroplast thylakoid membrane. May play a role in inhibiting senescence. This is Inner membrane protein PPF-1, chloroplastic (PPF-1) from Pisum sativum (Garden pea).